Here is a 267-residue protein sequence, read N- to C-terminus: MSTYNWDEKHILTFPEEKVALSTKDVHVYYGKNESIKGIDMQFERNKITALIGPSGSGKSTYLRSLNRMNDTIDIAKVTGQILYRGIDVNRPEINVYEMRKHIGMVFQRPNPFAKSIYRNITFAHERAGVKDKQVLDEIVETSLRQAALWDQVKDDLHKSALTLSGGQQQRLCIARAISVKPDILLMDEPASALDPIATMQLEETMFELKKDFTIIIVTHNMQQAARASDYTGFFYLGDLIEYDKTATIFQNAKLQSTNDYVSGHFG.

An ABC transporter domain is found at 21–262 (LSTKDVHVYY…AKLQSTNDYV (242 aa)). ATP is bound at residue 53-60 (GPSGSGKS).

The protein belongs to the ABC transporter superfamily. Phosphate importer (TC 3.A.1.7) family. In terms of assembly, the complex is composed of two ATP-binding proteins (PstB), two transmembrane proteins (PstC and PstA) and a solute-binding protein (PstS).

The protein localises to the cell membrane. It catalyses the reaction phosphate(out) + ATP + H2O = ADP + 2 phosphate(in) + H(+). In terms of biological role, part of the ABC transporter complex PstSACB involved in phosphate import. Responsible for energy coupling to the transport system. This chain is Phosphate import ATP-binding protein PstB 2, found in Streptococcus pneumoniae (strain ATCC BAA-255 / R6).